The primary structure comprises 309 residues: UPF0276 protein RB0508 (309 aa).

Belongs to the UPF0276 family.

The sequence is that of UPF0276 protein RB0508 from Rhizobium meliloti (strain 1021) (Ensifer meliloti).